Here is a 606-residue protein sequence, read N- to C-terminus: Nuclear hormone receptor E75 (606 aa).

Residues 29-105 constitute a DNA-binding region (nuclear receptor); it reads TVLCRVCGDK…VGMSRDAVRF (77 aa). 2 consecutive NR C4-type zinc fingers follow at residues 32-52 and 69-93; these read CRVC…CEGC and CTKN…LKKC. Residues 138–392 form the NR LBD domain; it reads DDTRVTAAII…APWDDSRSSW (255 aa). Disordered stretches follow at residues 382–413, 454–519, and 546–576; these read GAPW…DEAM, RRRH…EKER, and RKPT…PRSW. Low complexity-rich tracts occupy residues 390–406 and 501–512; these read SSWS…PSSS and LSSPSVCSSPRS. Over residues 546–558 the composition is skewed to polar residues; sequence RKPTTSPIKSSVR.

The protein belongs to the nuclear hormone receptor family. NR1 subfamily. Expressed in the epidermis, eyestalk and the nerve cord of the pre-molt shrimp.

Its subcellular location is the nucleus. The polypeptide is Nuclear hormone receptor E75 (E75) (Metapenaeus ensis (Greasyback shrimp)).